The chain runs to 132 residues: Acyl carrier protein 3, chloroplastic (132 aa).

Residues 1–49 (MASIAGSAVSFAKPVKAINTNSLSFSGARRGNAFLRLQPVPMRFAVCCS) constitute a chloroplast transit peptide. Residues 52-127 (QDTVEKVCEI…DAATLIDKLV (76 aa)) form the Carrier domain. The residue at position 87 (Ser87) is an O-(pantetheine 4'-phosphoryl)serine.

The protein belongs to the acyl carrier protein (ACP) family. In terms of processing, 4'-phosphopantetheine is transferred from CoA to a specific serine of apo-ACP by acpS. This modification is essential for activity because fatty acids are bound in thioester linkage to the sulfhydryl of the prosthetic group.

The protein localises to the plastid. The protein resides in the chloroplast. The protein operates within lipid metabolism; fatty acid biosynthesis. Its function is as follows. Carrier of the growing fatty acid chain in fatty acid biosynthesis. In Hordeum vulgare (Barley), this protein is Acyl carrier protein 3, chloroplastic (ACL1.3).